A 420-amino-acid polypeptide reads, in one-letter code: Putative competence-damage inducible protein (420 aa).

The protein belongs to the CinA family.

The protein is Putative competence-damage inducible protein of Lactiplantibacillus plantarum (strain ATCC BAA-793 / NCIMB 8826 / WCFS1) (Lactobacillus plantarum).